A 225-amino-acid chain; its full sequence is uncharacterized protein (225 aa).

Residues 32-82 (PKDKKKQNDTENKKKQPKDGENDKQKEQAETQPFEWIQQKDADDKKESNTA) are disordered. Basic and acidic residues-rich tracts occupy residues 37-60 (KQND…KEQA) and 69-79 (QQKDADDKKES).

The protein belongs to the MG067/MG068/MG395 family.

This is an uncharacterized protein from Mycoplasma pneumoniae (strain ATCC 29342 / M129 / Subtype 1) (Mycoplasmoides pneumoniae).